A 355-amino-acid polypeptide reads, in one-letter code: Ataxin-3 (355 aa).

Residue Met1 forms a Peptide (Met-Gly) (interchain with G-Cter in ubiquitin) linkage. The Josephin domain occupies 1-180 (MESIFHEKQE…DCEADQLLQM (180 aa)). Cys14 acts as the Nucleophile in catalysis. His119 functions as the Proton acceptor in the catalytic mechanism. The active site involves Asn134. A Glycyl lysine isopeptide (Lys-Gly) (interchain with G-Cter in ubiquitin) cross-link involves residue Lys200. 2 UIM domains span residues 224-243 (DDEDDLQRALAMSRQEIDME) and 244-263 (DEEADLRRAIQLSMQGSSRG). The disordered stretch occupies residues 257–333 (MQGSSRGMCE…AGNAMSEEDV (77 aa)). Phosphoserine is present on residues Ser268, Ser272, and Ser273. Residues 279–301 (EELRKRREAYFEKQQHQQQEADR) are compositionally biased toward basic and acidic residues. Positions 312–326 (PTTSSGGLRSNQAGN) are enriched in polar residues. Phosphoserine is present on Ser321. In terms of domain architecture, UIM 3 spans 329 to 348 (SEEDVLRATVTVSLETAKDS).

Interacts with STUB1/CHIP (when monoubiquitinated). Interacts with DNA repair proteins RAD23A and RAD23B. Interacts with BECN1 (via its poly-Gln domain). Interacts with PRKN, UBR2, VCP and tubulin. Monoubiquitinated by UBE2W, possibly leading to activate the deubiquitinating enzyme activity. Ubiquitously expressed.

It is found in the nucleus matrix. Its subcellular location is the nucleus. It localises to the lysosome membrane. The enzyme catalyses Thiol-dependent hydrolysis of ester, thioester, amide, peptide and isopeptide bonds formed by the C-terminal Gly of ubiquitin (a 76-residue protein attached to proteins as an intracellular targeting signal).. Its function is as follows. Deubiquitinating enzyme involved in protein homeostasis maintenance, transcription, cytoskeleton regulation, myogenesis and degradation of misfolded chaperone substrates. Binds long polyubiquitin chains and trims them, while it has weak or no activity against chains of 4 or less ubiquitins. Involved in degradation of misfolded chaperone substrates via its interaction with STUB1/CHIP: recruited to monoubiquitinated STUB1/CHIP, and restricts the length of ubiquitin chain attached to STUB1/CHIP substrates and preventing further chain extension. Interacts with key regulators of transcription and represses transcription: acts as a histone-binding protein that regulates transcription. Acts as a negative regulator of mTORC1 signaling in response to amino acid deprivation by mediating deubiquitination of RHEB, thereby promoting RHEB inactivation by the TSC-TBC complex. Regulates autophagy via the deubiquitination of 'Lys-402' of BECN1 leading to the stabilization of BECN1. In Rattus norvegicus (Rat), this protein is Ataxin-3 (Atxn3).